The primary structure comprises 339 residues: Olfactory receptor 7E24 (339 aa).

The Extracellular portion of the chain corresponds to 1–43 (MSYFPILFFFFLKRCPSYTEPQNLTGVSEFLLLGLSEDPELQP). The N-linked (GlcNAc...) asparagine glycan is linked to asparagine 23. Residues 44–64 (VLAGLFLSMYLVTVLGNLLII) form a helical membrane-spanning segment. At 65–72 (LAVSSDSH) the chain is on the cytoplasmic side. The chain crosses the membrane as a helical span at residues 73–93 (LHTPMYFFLSNLSLADIGFTS). The Extracellular portion of the chain corresponds to 94 to 117 (TTVPKMIVDMQTHSRVISYEGCLT). A disulfide bridge links cysteine 115 with cysteine 207. Residues 118-138 (QMSFFVLFACMDDMLLSVMAY) traverse the membrane as a helical segment. Residues 139–157 (DRFVAICHPLHYRIIMNPR) lie on the Cytoplasmic side of the membrane. A helical membrane pass occupies residues 158–178 (LCGFLILLSFFISLLDSQLHN). The Extracellular segment spans residues 179 to 215 (LIMLQLTCFKDVDISNFFCDPSQLLHLRCSDTFINEM). A helical transmembrane segment spans residues 216–235 (VIYFMGAIFGCLPISGILFS). Residues 236–255 (YYKIVSPILRVPTSDGKYKA) lie on the Cytoplasmic side of the membrane. Residues 256–276 (FSTCGSHLAVVCLFYGTGLVG) form a helical membrane-spanning segment. Residues 277 to 289 (YLSSAVLPSPRKS) lie on the Extracellular side of the membrane. The chain crosses the membrane as a helical span at residues 290-310 (MVASVMYTVVTPMLNPFIYSL). Topologically, residues 311-339 (RNKDIQSALCRLHGRIIKSHHLHPFCYMG) are cytoplasmic.

The protein belongs to the G-protein coupled receptor 1 family.

The protein localises to the cell membrane. Functionally, odorant receptor. This Homo sapiens (Human) protein is Olfactory receptor 7E24 (OR7E24).